A 415-amino-acid chain; its full sequence is Homoserine O-succinyltransferase (415 aa).

Residues 69–383 enclose the AB hydrolase-1 domain; sequence NAVLVCHALN…PHGHDAFLLD (315 aa). Ser175 (nucleophile) is an active-site residue. Residue Arg245 coordinates substrate. Active-site residues include Asp344 and His377. Asp378 serves as a coordination point for substrate.

Belongs to the AB hydrolase superfamily. MetX family. In terms of assembly, homodimer.

The protein localises to the cytoplasm. The catalysed reaction is L-homoserine + succinyl-CoA = O-succinyl-L-homoserine + CoA. It functions in the pathway amino-acid biosynthesis; L-methionine biosynthesis via de novo pathway; O-succinyl-L-homoserine from L-homoserine: step 1/1. Its function is as follows. Transfers a succinyl group from succinyl-CoA to L-homoserine, forming succinyl-L-homoserine. The sequence is that of Homoserine O-succinyltransferase from Bordetella pertussis (strain Tohama I / ATCC BAA-589 / NCTC 13251).